A 315-amino-acid polypeptide reads, in one-letter code: MAFPEPKPRAPELPRKQLKTLDCGQGAVRAVRFNVDGNYCLTCGSDKTLKLWNPLRGTLLRTYSGHGYEVLDAAGSFDNSHLCSGGGDKTVVLWDVATGQVVRKFRGHAGKVNTVQFNEEATVILSGSIDSSVRCWDCRSRKPEPVQTLDEARDGISSVKVSDHEILAGSVDGRVRRYDLRMGQVTSDYVGSPITCTCFSRDGQCTLISSLDSTLRLLDKDTGELLGEYVGHKNQKYKLDCCLSERDTHVVSCSEDGKVFFWDLVEGSLALALPVGSNVVQSLAYHPADPCLLTAMGGSIQYWREETYEAEGGAG.

WD repeat units lie at residues 23–62, 65–104, 107–146, 151–188, 190–228, 231–272, and 275–313; these read CGQGAVRAVRFNVDGNYCLTCGSDKTLKLWNPLRGTLLRT, GHGYEVLDAAGSFDNSHLCSGGGDKTVVLWDVATGQVVRK, GHAGKVNTVQFNEEATVILSGSIDSSVRCWDCRSRKPEPV, EARDGISSVKVSDHEILAGSVDGRVRRYDLRMGQVTSD, VGSPITCTCFSRDGQCTLISSLDSTLRLLDKDTGELLGE, GHKN…LALA, and VGSNVVQSLAYHPADPCLLTAMGGSIQYWREETYEAEGG.

This sequence belongs to the WD repeat MORG1 family. Interacts with EGLN3/PHD3. Interacts with ERK signaling proteins MAP2K1/MEK1, MAP2K2/MEK2, LAMTOR3, ARAF/Raf-1, MAPK1/ERK2 and MAPK3/ERK1. Identified in the spliceosome C complex. Interacts with PARD6B and CRB3. Interacts strongly with GTP-bound RRAGA but not with inactive GDP-bound. Interacts with p62/SQSTM1. Highly expressed in testis and brain. Expressed at intermediate level in heart, liver and kidney. Weakly expressed in spleen and lung and absent in muscle.

It is found in the cytoplasm. Its subcellular location is the lysosome. The protein resides in the nucleus. In terms of biological role, molecular scaffold protein for various multimeric protein complexes. Acts as a module in the assembly of a multicomponent scaffold for the ERK pathway, linking ERK responses to specific agonists. At low concentrations it enhances ERK activation, whereas high concentrations lead to the inhibition of ERK activation. Also involved in response to hypoxia by acting as a negative regulator of HIF1A/HIF-1-alpha via its interaction with EGLN3/PHD3. May promote degradation of HIF1A. May act by recruiting signaling complexes to a specific upstream activator. May also be involved in pre-mRNA splicing. Participates in tight junction development by regulating apico-basal polarity, a key step in tissue development and organization. Mechanistically, regulates the translocation of PAR6-aPKC from the cytoplasm to the apical surface by acting as an adapter between PARD6B AND CRB3. Also acts as a negative regulator of mTORC1 under nutrient-rich conditions by binding to the active Rag GTPases to inhibit mTORC1 localization to the lysosome and phosphorylation of downstream targets. This facilitates constitutive basal autophagy during nutrient availability. The protein is WD repeat domain-containing protein 83 (Wdr83) of Rattus norvegicus (Rat).